Here is a 127-residue protein sequence, read N- to C-terminus: Fluoride-specific ion channel FluC 1 (127 aa).

Transmembrane regions (helical) follow at residues 4–24 (TLLAVFIGGGVGSMARWLVSL), 35–55 (VGTLIVNLVGAFIIGLTLAFF), 71–91 (TGFCGGLTTFSTFSVEVVYLI), and 101–121 (GTILLNVAGSLAMTMLAFILV). Residues glycine 75 and threonine 78 each coordinate Na(+).

It belongs to the fluoride channel Fluc/FEX (TC 1.A.43) family.

Its subcellular location is the cell inner membrane. The catalysed reaction is fluoride(in) = fluoride(out). Na(+) is not transported, but it plays an essential structural role and its presence is essential for fluoride channel function. In terms of biological role, fluoride-specific ion channel. Important for reducing fluoride concentration in the cell, thus reducing its toxicity. The polypeptide is Fluoride-specific ion channel FluC 1 (Yersinia pestis).